Reading from the N-terminus, the 240-residue chain is Ribosomal RNA large subunit methyltransferase E (240 aa).

Gly residues predominate over residues 1–20; it reads MSKAGGNKGGVKTGGRGGAG. The interval 1-27 is disordered; the sequence is MSKAGGNKGGVKTGGRGGAGSSNLQVR. Residues Gly-92, Trp-94, Asp-115, Asp-131, and Asp-155 each contribute to the S-adenosyl-L-methionine site. The active-site Proton acceptor is the Lys-195.

It belongs to the class I-like SAM-binding methyltransferase superfamily. RNA methyltransferase RlmE family.

It localises to the cytoplasm. The catalysed reaction is uridine(2552) in 23S rRNA + S-adenosyl-L-methionine = 2'-O-methyluridine(2552) in 23S rRNA + S-adenosyl-L-homocysteine + H(+). In terms of biological role, specifically methylates the uridine in position 2552 of 23S rRNA at the 2'-O position of the ribose in the fully assembled 50S ribosomal subunit. In Brucella anthropi (strain ATCC 49188 / DSM 6882 / CCUG 24695 / JCM 21032 / LMG 3331 / NBRC 15819 / NCTC 12168 / Alc 37) (Ochrobactrum anthropi), this protein is Ribosomal RNA large subunit methyltransferase E.